Here is a 688-residue protein sequence, read N- to C-terminus: Pentatricopeptide repeat-containing protein At3g18020 (688 aa).

PPR repeat units follow at residues 53–88, 89–123, 124–158, 161–195, 196–230, 231–261, 271–305, 306–340, 341–375, 376–406, 411–445, 446–480, 482–517, 518–552, 553–583, 588–622, and 623–657; these read DRAYWRRRIHSICAVRRNPDEALRILDGLCLRGYRP, DSLNLSSVIHSLCDAGRFDEAHRRFLLFLASGFIP, DERTCNVIIARLLYSRSPVSTLGVIHRLIGFKKEF, SLTNYNRLMNQLCTIYRVIDAHKLVFDMRNRGHLP, DVVTFTTLIGGYCEIRELEVAHKVFDEMRVCGIRP, NSLTLSVLIGGFLKMRDVETGRKLMKELWEY, KAAAFANLVDSMCREGYFNDIFEIAENMSLCESVN, VEFAYGHMIDSLCRYRRNHGAARIVYIMKSKGLKP, RRTSYNAIIHGLCKDGGCMRAYQLLEEGSEFEFFP, SEYTYKLLMESLCKELDTGKARNVLELMLRK, RTRIYNIYLRGLCVMDNPTEILNVLVSMLQGDCRP, DEYTLNTVINGLCKMGRVDDAMKVLDDMMTGKFCA, DAVTLNTVMCGLLAQGRAEEALDVLNRVMPENKIKP, GVVAYNAVIRGLFKLHKGDEAMSVFGQLEKASVTA, DSTTYAIIIDGLCVTNKVDMAKKFWDDVIWP, DAFVYAAFLKGLCQSGYLSDACHFLYDLADSGAIP, and NVVCYNTVIAECSRSGLKREAYQILEEMRKNGQAP.

Belongs to the PPR family. P subfamily.

This chain is Pentatricopeptide repeat-containing protein At3g18020, found in Arabidopsis thaliana (Mouse-ear cress).